Consider the following 222-residue polypeptide: Pyridoxine/pyridoxamine 5'-phosphate oxidase (222 aa).

Residues 71–76, 86–87, Lys-93, and Gln-115 contribute to the FMN site; these read RMVLLK and YT. A substrate-binding site is contributed by Lys-76. 3 residues coordinate substrate: Tyr-133, Arg-137, and Ser-141. Residues 150–151 and Trp-195 each bind FMN; that span reads QS. A substrate-binding site is contributed by 201–203; it reads RLH. Arg-205 is an FMN binding site.

It belongs to the pyridoxamine 5'-phosphate oxidase family. Homodimer. FMN serves as cofactor.

The catalysed reaction is pyridoxamine 5'-phosphate + O2 + H2O = pyridoxal 5'-phosphate + H2O2 + NH4(+). It catalyses the reaction pyridoxine 5'-phosphate + O2 = pyridoxal 5'-phosphate + H2O2. It participates in cofactor metabolism; pyridoxal 5'-phosphate salvage; pyridoxal 5'-phosphate from pyridoxamine 5'-phosphate: step 1/1. It functions in the pathway cofactor metabolism; pyridoxal 5'-phosphate salvage; pyridoxal 5'-phosphate from pyridoxine 5'-phosphate: step 1/1. Catalyzes the oxidation of either pyridoxine 5'-phosphate (PNP) or pyridoxamine 5'-phosphate (PMP) into pyridoxal 5'-phosphate (PLP). In Caulobacter vibrioides (strain ATCC 19089 / CIP 103742 / CB 15) (Caulobacter crescentus), this protein is Pyridoxine/pyridoxamine 5'-phosphate oxidase.